Reading from the N-terminus, the 358-residue chain is UDP-N-acetylglucosamine--N-acetylmuramyl-(pentapeptide) pyrophosphoryl-undecaprenol N-acetylglucosamine transferase (358 aa).

Residues 11 to 13 (TGG), Asn-124, Arg-164, Ser-195, and Gln-291 contribute to the UDP-N-acetyl-alpha-D-glucosamine site.

The protein belongs to the glycosyltransferase 28 family. MurG subfamily.

Its subcellular location is the cell inner membrane. The enzyme catalyses di-trans,octa-cis-undecaprenyl diphospho-N-acetyl-alpha-D-muramoyl-L-alanyl-D-glutamyl-meso-2,6-diaminopimeloyl-D-alanyl-D-alanine + UDP-N-acetyl-alpha-D-glucosamine = di-trans,octa-cis-undecaprenyl diphospho-[N-acetyl-alpha-D-glucosaminyl-(1-&gt;4)]-N-acetyl-alpha-D-muramoyl-L-alanyl-D-glutamyl-meso-2,6-diaminopimeloyl-D-alanyl-D-alanine + UDP + H(+). It participates in cell wall biogenesis; peptidoglycan biosynthesis. In terms of biological role, cell wall formation. Catalyzes the transfer of a GlcNAc subunit on undecaprenyl-pyrophosphoryl-MurNAc-pentapeptide (lipid intermediate I) to form undecaprenyl-pyrophosphoryl-MurNAc-(pentapeptide)GlcNAc (lipid intermediate II). The protein is UDP-N-acetylglucosamine--N-acetylmuramyl-(pentapeptide) pyrophosphoryl-undecaprenol N-acetylglucosamine transferase of Leptospira interrogans serogroup Icterohaemorrhagiae serovar copenhageni (strain Fiocruz L1-130).